Consider the following 680-residue polypeptide: Viral IRF2-like protein (680 aa).

Residues Ser-7–Met-103 constitute a DNA-binding region (IRF tryptophan pentad repeat). 4 disordered regions span residues Ser-156–Glu-201, Glu-220–Thr-257, Glu-343–Ser-365, and Ala-403–Ser-423. A compositionally biased stretch (low complexity) spans Lys-168–Ser-188. Residues Glu-191–Asn-200 are compositionally biased toward acidic residues. The segment covering Glu-220–Asp-240 has biased composition (low complexity).

Belongs to the IRF family. As to quaternary structure, interacts with host EIF2AK2/PKR. Interacts with host USP7.

The protein resides in the host nucleus. It is found in the host cytoplasm. DNA-binding transcription factor that plays a role in the modulation of host immune response. Acts by interacting with host EIF2AK2/PKR and inhibiting its activation. In turn, EIF2AK2/PKR substrates including EIF2S1 or histone H2A are not phosphorylated. Inhibits type I interferon signaling by targeting host IRF3 during viral reactivation from latency. Attenuates the transcriptional activity of host FOXO3 via activation of the AKT1 signaling pathway, inhibiting FOXO3-mediated apoptosis. Also suppresses the expression of viral early lytic genes in both newly infected and reactivated infected host cells allowing regulation of viral life cycle by harnessing the interferon pathway. Mechanistically, promotes host PML bodies formation as well as host antiviral restriction factors IFIT1-3 expression leading to inhibition of viral early lytic proteins. Also regulates host TRAF3 and TRAF6 ubiquitination by interacting with USP7 deubiquitinase thereby influencing TRAF3/6-mediated signal transduction. This chain is Viral IRF2-like protein (vIRF-2), found in Human herpesvirus 8 type P (isolate GK18) (HHV-8).